The chain runs to 55 residues: Large ribosomal subunit protein bL33 (55 aa).

It belongs to the bacterial ribosomal protein bL33 family.

The chain is Large ribosomal subunit protein bL33 from Agrobacterium fabrum (strain C58 / ATCC 33970) (Agrobacterium tumefaciens (strain C58)).